Reading from the N-terminus, the 436-residue chain is GTPase Der (436 aa).

EngA-type G domains follow at residues 4–167 (PVVA…KNIP) and 176–351 (VQFC…ENHS). GTP contacts are provided by residues 10–17 (GRPNVGKS), 57–61 (DTGGI), 119–122 (NKVD), 182–189 (GRPNVGKS), 229–233 (DTAGM), and 294–297 (NKWD). Positions 352–436 (MRVQTNILND…PIRIFARARK (85 aa)) constitute a KH-like domain.

It belongs to the TRAFAC class TrmE-Era-EngA-EngB-Septin-like GTPase superfamily. EngA (Der) GTPase family. Associates with the 50S ribosomal subunit.

In terms of biological role, GTPase that plays an essential role in the late steps of ribosome biogenesis. In Bacillus licheniformis (strain ATCC 14580 / DSM 13 / JCM 2505 / CCUG 7422 / NBRC 12200 / NCIMB 9375 / NCTC 10341 / NRRL NRS-1264 / Gibson 46), this protein is GTPase Der.